A 605-amino-acid polypeptide reads, in one-letter code: Microtubule-associated protein VP10 (605 aa).

In terms of assembly, interacts with VP1.

The protein resides in the virion. It is found in the host cytoplasm. Its subcellular location is the host cytoskeleton. Functionally, minor inner capsid component. Displays NTPase and RNA 5'-triphosphatase (RTPase) activities. May function as a cofactor of polymerase VP1. Associates with microtubules and plays a role in the formation, structural organization and morphology of viral inclusions, where the assembly of cores and the replication of viral RNA occur. The sequence is that of Microtubule-associated protein VP10 from Colorado tick fever virus (strain USA/Florio N-7180) (CTFV).